Reading from the N-terminus, the 406-residue chain is 2-epi-valiolone synthase (406 aa).

The tract at residues Met-1–Ser-21 is disordered. Residues Glu-105–Lys-108, Gly-137–Asp-141, Thr-161–Ser-162, Lys-174, Lys-183, and Cys-201–Thr-204 contribute to the NAD(+) site. Zn(2+)-binding residues include Glu-216, His-287, and His-304.

Belongs to the sugar phosphate cyclases superfamily. EVS family. It depends on NAD(+) as a cofactor. Co(2+) is required as a cofactor. Requires Zn(2+) as cofactor.

It catalyses the reaction D-sedoheptulose 7-phosphate = 2-epi-valiolone + phosphate. Functionally, catalyzes the conversion of sedoheptulose 7-phosphate to 2-epi-valiolone, which may serve as an alternative precursor for aminocyclitol biosynthesis. In Stigmatella aurantiaca (strain DW4/3-1), this protein is 2-epi-valiolone synthase.